A 375-amino-acid chain; its full sequence is Growth/differentiation factor 8 (375 aa).

An N-terminal signal peptide occupies residues 1 to 18 (MQKLQIFVYIYLFVLIVA). A propeptide spanning residues 19-266 (GPVDLNENSE…VTDTPKRSRR (248 aa)) is cleaved from the precursor. Residues Asn48 and Asn71 are each glycosylated (N-linked (GlcNAc...) asparagine). Disulfide bonds link Cys272–Cys282, Cys281–Cys340, Cys309–Cys372, and Cys313–Cys374.

Belongs to the TGF-beta family. As to quaternary structure, homodimer; disulfide-linked. Interacts with WFIKKN2, leading to inhibit its activity. Interacts with FSTL3. Post-translationally, synthesized as large precursor molecule that undergoes proteolytic cleavage to generate an N-terminal propeptide and a disulfide linked C-terminal dimer, which is the biologically active molecule. The circulating form consists of a latent complex of the C-terminal dimer and other proteins, including its propeptide, which maintain the C-terminal dimer in a latent, inactive state. Ligand activation requires additional cleavage of the prodomain by a tolloid-like metalloproteinase.

It is found in the secreted. Acts specifically as a negative regulator of skeletal muscle growth. The protein is Growth/differentiation factor 8 (MSTN) of Aepyceros melampus (Impala).